Here is a 602-residue protein sequence, read N- to C-terminus: Elongation factor 4 (602 aa).

One can recognise a tr-type G domain in the interval arginine 7–lysine 189. GTP contacts are provided by residues aspartate 19–threonine 24 and asparagine 136–aspartate 139.

Belongs to the TRAFAC class translation factor GTPase superfamily. Classic translation factor GTPase family. LepA subfamily.

The protein resides in the cell inner membrane. It catalyses the reaction GTP + H2O = GDP + phosphate + H(+). Functionally, required for accurate and efficient protein synthesis under certain stress conditions. May act as a fidelity factor of the translation reaction, by catalyzing a one-codon backward translocation of tRNAs on improperly translocated ribosomes. Back-translocation proceeds from a post-translocation (POST) complex to a pre-translocation (PRE) complex, thus giving elongation factor G a second chance to translocate the tRNAs correctly. Binds to ribosomes in a GTP-dependent manner. The sequence is that of Elongation factor 4 from Stenotrophomonas maltophilia (strain R551-3).